Reading from the N-terminus, the 236-residue chain is MRGNVYLLWGATTTGKTAFSVSVAKERGWSVIALDRFQGYHEISTGSGAPTNNELEKTERIYITPQRGLADGIITAKDYNYWLKSRVLSLPEGKSDFIIEGGSVSLLKEMVSDEFWADFLWEIKIFRAPSKDVFIKRAKRRITDMLHPEDGRPSIMDEVSSFFMNHKTIHPLEDIDGYRTIIDYCRCKKIGFDKLKIMTTDQEKIIISGIAEEYYAHALWQEQETPCFPHSWSRRW.

This sequence belongs to the isopentenyl transferase family.

The catalysed reaction is dimethylallyl diphosphate + AMP = N(6)-(dimethylallyl)adenosine 5'-phosphate + diphosphate. In terms of biological role, transfers dimethylallyl groups to AMP as part of the biosynthesis of cytokinin phytohormones. This Pantoea agglomerans pv. gypsophilae (Erwinia herbicola) protein is Adenylate dimethylallyltransferase (ipt).